The primary structure comprises 75 residues: MASLKKSLFLVLFLGFVSVSICEEEKRQEDEDEHEEEGENQEEGSEEKRGLFSVLGSVAKHVVPRVVPVIAEHLG.

The N-terminal stretch at 1–22 (MASLKKSLFLVLFLGFVSVSIC) is a signal peptide. Positions 23–49 (EEEKRQEDEDEHEEEGENQEEGSEEKR) are excised as a propeptide. The interval 24–48 (EEKRQEDEDEHEEEGENQEEGSEEK) is disordered. Over residues 30–45 (DEDEHEEEGENQEEGS) the composition is skewed to acidic residues. Residue leucine 74 is modified to Leucine amide.

Belongs to the frog skin active peptide (FSAP) family. Caerin subfamily. As to expression, expressed by the skin glands.

The protein localises to the secreted. The protein resides in the target cell membrane. Functionally, cationic amphipathic alpha-helical antimicrobial peptide with weak or no activity against both Gram-positive and Gram-negative bacteria. Is weakly active against E.coli (MIC=25 uM), E.cloacae (MIC=50 uM), K.pneumoniae (MIC=25 uM), and S.haemolyticus (MIC=50 uM). Has no activity against S.typhimurium, S.enteritidis, B.megaterium, and S.aureus (MIC&gt;100 uM). The chain is Caerin 1.11 from Ranoidea caerulea (Green tree frog).